The sequence spans 283 residues: Non-selective voltage-gated ion channel VDAC3 (283 aa).

N-acetylcysteine is present on C2. T4 is subject to Phosphothreonine. K12, K15, and K20 each carry N6-acetyllysine. 2 beta stranded membrane passes run 26–35 and 39–47; these read MVKIDLKTKS and VEFSTSGHA. Residues K53 and K61 each participate in a glycyl lysine isopeptide (Lys-Gly) (interchain with G-Cter in ubiquitin) cross-link. A run of 3 beta stranded transmembrane segments spans residues 54-64, 69-76, and 80-89; these read ASGNLETKYKV, LTFTQKWN, and TLGTEISWEN. At K90 the chain carries N6-acetyllysine. Residues 95 to 104 form a beta stranded membrane-spanning segment; it reads LKLTLDTIFV. Residues K109 and K110 each participate in a glycyl lysine isopeptide (Lys-Gly) (interchain with G-Cter in ubiquitin) cross-link. The next 10 membrane-spanning stretches (beta stranded) occupy residues 111–120, 123–130, 137–145, 150–158, 163–175, 178–185, 189–198, 202–211, 218–227, and 231–238; these read SGKLKASYKR, FSVGSNVD, TIYGWAVLA, LAGYQMSFD, KLSQNNFALGYKA, FQLHTHVN, EFGGSIYQKV, IETSINLAWT, RFGIAAKYML, and TSLSAKVN. K163 participates in a covalent cross-link: Glycyl lysine isopeptide (Lys-Gly) (interchain with G-Cter in ubiquitin). S241 is subject to Phosphoserine. NAD(+)-binding positions include 242–244 and 260–264; these read LIG and SALID. 2 consecutive transmembrane segments (beta stranded) span residues 242-251 and 254-263; these read LIGLGYTQTL and GVKLTLSALI. K266 carries the N6-acetyllysine; alternate modification. A Glycyl lysine isopeptide (Lys-Gly) (interchain with G-Cter in ubiquitin); alternate cross-link involves residue K266. The beta stranded transmembrane segment at 273-282 threads the bilayer; it reads HKVGLGFELE. Residue K274 forms a Glycyl lysine isopeptide (Lys-Gly) (interchain with G-Cter in ubiquitin) linkage.

It belongs to the eukaryotic mitochondrial porin family. As to quaternary structure, interacts with ARMC12 in a TBC1D21-dependent manner. Interacts with MISFA. Post-translationally, ubiquitinated by PRKN during mitophagy, leading to its degradation and enhancement of mitophagy. Deubiquitinated by USP30. As to expression, expressed in erythrocytes (at protein level). Widely expressed. Highest in testis.

The protein localises to the mitochondrion outer membrane. The protein resides in the membrane. The catalysed reaction is chloride(in) = chloride(out). The enzyme catalyses K(+)(in) = K(+)(out). In terms of biological role, non-selective voltage-gated ion channel that mediates the transport of anions and cations through the mitochondrion outer membrane and plasma membrane. Forms a high-conducting channel with a stable open state and a voltage-induced closure with a mild preference for anions over cations. Involved in male fertility and sperm mitochondrial sheath formation. The polypeptide is Non-selective voltage-gated ion channel VDAC3 (Homo sapiens (Human)).